The chain runs to 60 residues: DNA-directed RNA polymerase subunit Rpo6 (60 aa).

This sequence belongs to the archaeal Rpo6/eukaryotic RPB6 RNA polymerase subunit family. As to quaternary structure, part of the RNA polymerase complex.

Its subcellular location is the cytoplasm. The enzyme catalyses RNA(n) + a ribonucleoside 5'-triphosphate = RNA(n+1) + diphosphate. DNA-dependent RNA polymerase (RNAP) catalyzes the transcription of DNA into RNA using the four ribonucleoside triphosphates as substrates. This chain is DNA-directed RNA polymerase subunit Rpo6, found in Picrophilus torridus (strain ATCC 700027 / DSM 9790 / JCM 10055 / NBRC 100828 / KAW 2/3).